We begin with the raw amino-acid sequence, 424 residues long: Magnesium-chelatase subunit ChlI-1, chloroplastic (424 aa).

The N-terminal 60 residues, 1 to 60, are a transit peptide targeting the chloroplast; the sequence is MASLLGTSSSAIWASPSLSSPSSKPSSSPICFRPGKLFGSKLNAGIQIRPKKNRSRYHVS. V61 carries the N-acetylvaline modification. Disulfide bonds link C102/C193 and C354/C396. 119 to 126 lines the ATP pocket; that stretch reads GDRGTGKS. S355 carries the phosphoserine modification.

This sequence belongs to the Mg-chelatase subunits D/I family. The magnesium chelatase complex is a heterotrimer consisting of subunits CHLI, CHLD and CHLH. Interacts with CHLH and CHLD.

It is found in the plastid. The protein resides in the chloroplast. It carries out the reaction protoporphyrin IX + Mg(2+) + ATP + H2O = Mg-protoporphyrin IX + ADP + phosphate + 3 H(+). It functions in the pathway porphyrin-containing compound metabolism; chlorophyll biosynthesis. With respect to regulation, redox regulation; active in reducing conditions, inactive in oxidizing conditions. Thioredoxins f and m mediate the reversible reductive activation of oxidized CHLI1. Involved in chlorophyll biosynthesis. Catalyzes the insertion of magnesium ion into protoporphyrin IX to yield Mg-protoporphyrin IX. The magnesium-chelatase is a complex of three subunits, CHLI, CHLD and CHLH. The reaction takes place in two steps, with an ATP-dependent activation followed by an ATP-dependent chelation step. Possesses high affinity for ATP and may play a major role in chlorophyll biosynthesis. Does not bind abscisic acid (ABA), but is a positive regulator of ABA signaling. May be involved in ABA signaling in the control of stomatal aperture, but does not seem to have an effect on ABA-induced gene expression. This chain is Magnesium-chelatase subunit ChlI-1, chloroplastic (CHLI1), found in Arabidopsis thaliana (Mouse-ear cress).